Reading from the N-terminus, the 101-residue chain is uncharacterized protein (101 aa).

The first 24 residues, methionine 1 to serine 24, serve as a signal peptide directing secretion.

This is an uncharacterized protein from Haemophilus influenzae (strain ATCC 51907 / DSM 11121 / KW20 / Rd).